Consider the following 156-residue polypeptide: ATP synthase subunit b (156 aa).

A helical membrane pass occupies residues I5–P27.

Belongs to the ATPase B chain family. F-type ATPases have 2 components, F(1) - the catalytic core - and F(0) - the membrane proton channel. F(1) has five subunits: alpha(3), beta(3), gamma(1), delta(1), epsilon(1). F(0) has three main subunits: a(1), b(2) and c(10-14). The alpha and beta chains form an alternating ring which encloses part of the gamma chain. F(1) is attached to F(0) by a central stalk formed by the gamma and epsilon chains, while a peripheral stalk is formed by the delta and b chains.

It localises to the cell inner membrane. In terms of biological role, f(1)F(0) ATP synthase produces ATP from ADP in the presence of a proton or sodium gradient. F-type ATPases consist of two structural domains, F(1) containing the extramembraneous catalytic core and F(0) containing the membrane proton channel, linked together by a central stalk and a peripheral stalk. During catalysis, ATP synthesis in the catalytic domain of F(1) is coupled via a rotary mechanism of the central stalk subunits to proton translocation. Functionally, component of the F(0) channel, it forms part of the peripheral stalk, linking F(1) to F(0). The protein is ATP synthase subunit b of Francisella tularensis subsp. tularensis (strain WY96-3418).